The following is a 698-amino-acid chain: Probable microcin-H47 secretion/processing ATP-binding protein MchF (698 aa).

Residues 26–145 (QTETAECGLA…RYFTGIALEV (120 aa)) form the Peptidase C39 domain. The active site involves Cys32. 5 consecutive transmembrane segments (helical) span residues 33-53 (GLAC…LISL), 90-110 (LGAL…VVLV), 289-311 (TCVV…MLLY), 315-337 (LTWI…YGYY), and 397-417 (LLFG…ILWL). An ABC transmembrane type-1 domain is found at 176–458 (LAKIFCLSVV…LTSFLLQLRI (283 aa)). In terms of domain architecture, ABC transporter spans 492-698 (LETTDLSYRY…LRTVDRIISI (207 aa)). 526–533 (GASGAGKT) provides a ligand contact to ATP.

This sequence belongs to the ABC transporter superfamily.

The protein resides in the cell membrane. In terms of biological role, probably involved, in conjunction with MchE, in the secretion of microcin H47. In Escherichia coli, this protein is Probable microcin-H47 secretion/processing ATP-binding protein MchF (mchF).